The sequence spans 372 residues: MNYPLTLEMDLENLEDLFWELDRLDNYNDTSLVENHLCPATEGPLMASFKAVFVPVAYSLIFLLGVIGNVLVLVILERHRQTRSSTETFLFHLAVADLLLVFILPFAVAEGSVGWVLGTFLCKTVIALHKVNFYCSSLLLACIAVDRYLAIVHAVHAYRHRRLLSIHITCGTIWLVGFLLALPEILFAKVSQGHHNNSLPRCTFSQENQAETHAWFTSRFLYHVAGFLLPMLVMGWCYVGVVHRLRQAQRRPQRQKAVRVAILVTSIFFLCWSPYHIVIFLDTLARLKAVDNTCKLNGSLPVAITMCEFLGLAHCCLNPMLYTFAGVKFRSDLSRLLTKLGCTGPASLCQLFPSWRRSSLSESENATSLTTF.

Residues 1–55 (MNYPLTLEMDLENLEDLFWELDRLDNYNDTSLVENHLCPATEGPLMASFKAVFVP) are Extracellular-facing. N-linked (GlcNAc...) asparagine glycosylation is present at N28. A helical membrane pass occupies residues 56-76 (VAYSLIFLLGVIGNVLVLVIL). Residues 77-88 (ERHRQTRSSTET) are Cytoplasmic-facing. The helical transmembrane segment at 89–109 (FLFHLAVADLLLVFILPFAVA) threads the bilayer. At 110-124 (EGSVGWVLGTFLCKT) the chain is on the extracellular side. C122 and C202 are oxidised to a cystine. A helical transmembrane segment spans residues 125–145 (VIALHKVNFYCSSLLLACIAV). The Cytoplasmic portion of the chain corresponds to 146 to 167 (DRYLAIVHAVHAYRHRRLLSIH). Residues 168–188 (ITCGTIWLVGFLLALPEILFA) form a helical membrane-spanning segment. The Extracellular segment spans residues 189-219 (KVSQGHHNNSLPRCTFSQENQAETHAWFTSR). N196 carries N-linked (GlcNAc...) asparagine glycosylation. Residues 220-240 (FLYHVAGFLLPMLVMGWCYVG) traverse the membrane as a helical segment. Topologically, residues 241 to 259 (VVHRLRQAQRRPQRQKAVR) are cytoplasmic. Residues 260-280 (VAILVTSIFFLCWSPYHIVIF) traverse the membrane as a helical segment. Over 281-304 (LDTLARLKAVDNTCKLNGSLPVAI) the chain is Extracellular. A helical membrane pass occupies residues 305–325 (TMCEFLGLAHCCLNPMLYTFA). Residues 326–372 (GVKFRSDLSRLLTKLGCTGPASLCQLFPSWRRSSLSESENATSLTTF) lie on the Cytoplasmic side of the membrane.

This sequence belongs to the G-protein coupled receptor 1 family. In terms of tissue distribution, expression in mature B-cells and Burkitt lymphoma cells.

Its subcellular location is the cell membrane. Functionally, cytokine receptor that binds to B-lymphocyte chemoattractant (BLC). Involved in B-cell migration into B-cell follicles of spleen and Peyer patches but not into those of mesenteric or peripheral lymph nodes. May have a regulatory function in Burkitt lymphoma (BL) lymphomagenesis and/or B-cell differentiation. This Homo sapiens (Human) protein is C-X-C chemokine receptor type 5 (CXCR5).